The following is a 345-amino-acid chain: Dihydroorotase (345 aa).

Zn(2+) is bound by residues H13 and H15. Residues 15-17 (HLR) and N41 contribute to the substrate site. Residues K99, H136, and H174 each contribute to the Zn(2+) site. K99 is subject to N6-carboxylysine. Residue H136 participates in substrate binding. L219 lines the substrate pocket. Zn(2+) is bound at residue D247. D247 is an active-site residue. Residues H251 and A263 each contribute to the substrate site.

Belongs to the metallo-dependent hydrolases superfamily. DHOase family. Class II DHOase subfamily. As to quaternary structure, homodimer. Requires Zn(2+) as cofactor.

It catalyses the reaction (S)-dihydroorotate + H2O = N-carbamoyl-L-aspartate + H(+). It functions in the pathway pyrimidine metabolism; UMP biosynthesis via de novo pathway; (S)-dihydroorotate from bicarbonate: step 3/3. In terms of biological role, catalyzes the reversible cyclization of carbamoyl aspartate to dihydroorotate. The chain is Dihydroorotase from Agrobacterium fabrum (strain C58 / ATCC 33970) (Agrobacterium tumefaciens (strain C58)).